A 623-amino-acid chain; its full sequence is UvrABC system protein C (623 aa).

The 79-residue stretch at 27 to 105 (GSPGVYRMLD…IKQLKPRYNV (79 aa)) folds into the GIY-YIG domain. The region spanning 215–250 (TKVQANLAEQMQAASEAMEFERAAALRDRIKALTQV) is the UVR domain.

This sequence belongs to the UvrC family. Interacts with UvrB in an incision complex.

It localises to the cytoplasm. In terms of biological role, the UvrABC repair system catalyzes the recognition and processing of DNA lesions. UvrC both incises the 5' and 3' sides of the lesion. The N-terminal half is responsible for the 3' incision and the C-terminal half is responsible for the 5' incision. This Cereibacter sphaeroides (strain ATCC 17023 / DSM 158 / JCM 6121 / CCUG 31486 / LMG 2827 / NBRC 12203 / NCIMB 8253 / ATH 2.4.1.) (Rhodobacter sphaeroides) protein is UvrABC system protein C.